The sequence spans 517 residues: Cytochrome b mRNA maturase bI3 (517 aa).

Over 1 to 31 (MAFRKSNVYLSLVNSYIIDSPQPSSINYWWN) the chain is Mitochondrial matrix. Positions 1-169 (MAFRKSNVYL…DIVSWLWGGF (169 aa)) are cytochrome b. A helical transmembrane segment spans residues 32–52 (MGSLLGLCLVIQIVTGIFMAM). At 53–84 (HYSSNIELAFSSVEHIMRDVHNGYILRYLHAN) the chain is on the mitochondrial intermembrane side. The helical transmembrane segment at 85-105 (GASFFFMVMFMHMAKGLYYGS) threads the bilayer. Topologically, residues 106–115 (YRSPRVTLWN) are mitochondrial matrix. A helical transmembrane segment spans residues 116–136 (VGVIIFILTIATAFLGYCCVY). The Mitochondrial intermembrane portion of the chain corresponds to 137 to 145 (GQMSHWGAT). A helical transmembrane segment spans residues 146 to 166 (VITNLFSAIPFVGNDIVSWLW). The Mitochondrial matrix segment spans residues 167–184 (GGFNMEDPYYSNMMLNKS). Positions 170-517 (NMEDPYYSNM…NNYFKIPPKY (348 aa)) are maturase. The chain crosses the membrane as a helical span at residues 185 to 205 (VLCWNIFIWMMNYYIIQLIIY). Residues 206-224 (NNMIWNKNNMVKMFIMRRK) are Mitochondrial intermembrane-facing. Residues 225 to 242 (LAVINMYMYMKLIIQRTY) traverse the membrane as a helical segment. At 243–517 (SYYMNNTIIY…NNYFKIPPKY (275 aa)) the chain is on the mitochondrial matrix side.

This sequence in the N-terminal section; belongs to the cytochrome b family. It in the C-terminal section; belongs to the LAGLIDADG endonuclease family. In terms of assembly, forms a ribonucleoprotein complex composed of maturase bI3 and 2 dimers of MRS1 that assemble around the bI3 RNA.

It is found in the mitochondrion inner membrane. Mitochondrial mRNA maturase required for splicing of intron 3 of the cytochrome b (COB) gene, containing its own coding sequence. In vivo splicing requires the formation of a ribonucleoprotein complex together with the imported mitochondrial RNA-splicing protein MRS1. The complex seems to stimulate the intrinsic ribozyme activity of intron bI3 through binding to and stabilizing specific secondary and tertiary structure elements in the RNA. This Saccharomyces cerevisiae (strain ATCC 204508 / S288c) (Baker's yeast) protein is Cytochrome b mRNA maturase bI3 (BI3).